Reading from the N-terminus, the 220-residue chain is GTP-binding nuclear protein GSP2/CNR2 (220 aa).

N-acetylserine is present on S2. S2 carries the phosphoserine modification. One can recognise a Small GTPase Ran-type domain in the interval 10–174; sequence EVPTFKLVLV…LWLARKLAGN (165 aa). Position 21 to 28 (21 to 28) interacts with GTP; that stretch reads DGGTGKTT. Residues 40-48 form a switch-I region; that stretch reads KKYIATIGV. GTP contacts are provided by residues G71, 125–128, and 153–155; these read NKVD and SAK. Residues 71–87 form a switch-II region; the sequence is GQEKFGGLRDGYYINAQ.

It belongs to the small GTPase superfamily. Ran family. In terms of assembly, found in a nuclear export complex with RanGTP, exportin and pre-miRNA.

It is found in the nucleus. Its function is as follows. GTP-binding protein involved in nucleocytoplasmic transport. Required for the import of protein into the nucleus and also for RNA export. Not essential for cell viability. The protein is GTP-binding nuclear protein GSP2/CNR2 (GSP2) of Saccharomyces cerevisiae (strain ATCC 204508 / S288c) (Baker's yeast).